The chain runs to 359 residues: Fructose-bisphosphate aldolase, cytoplasmic isozyme 2 (359 aa).

Residues Arg-52 and Lys-143 each coordinate substrate. Catalysis depends on Glu-184, which acts as the Proton acceptor. Lys-226 acts as the Schiff-base intermediate with dihydroxyacetone-P in catalysis.

The protein belongs to the class I fructose-bisphosphate aldolase family.

It is found in the cytoplasm. It catalyses the reaction beta-D-fructose 1,6-bisphosphate = D-glyceraldehyde 3-phosphate + dihydroxyacetone phosphate. It participates in carbohydrate degradation; glycolysis; D-glyceraldehyde 3-phosphate and glycerone phosphate from D-glucose: step 4/4. In Pisum sativum (Garden pea), this protein is Fructose-bisphosphate aldolase, cytoplasmic isozyme 2.